A 550-amino-acid polypeptide reads, in one-letter code: 4-coumarate--CoA ligase-like 8 (550 aa).

ATP is bound by residues S207, S208, G209, T210, T211, and K215. F253 provides a ligand contact to (E)-4-coumaroyl-AMP. A CoA-binding site is contributed by R274. Positions 276-347 are SBD1; sequence DLGEMMAAVE…KKYPTVDVYQ (72 aa). (E)-4-coumaroyl-AMP-binding residues include G325, Q347, G348, and T352. Positions 347, 348, 352, 430, and 445 each coordinate ATP. Residues 348-412 are SBD2; that stretch reads GYALTESNGA…LKGPSIAKGY (65 aa). K447 and K451 together coordinate (E)-4-coumaroyl-AMP. Positions 453 and 454 each coordinate CoA. K536 lines the ATP pocket. The short motif at 548-550 is the Microbody targeting signal element; that stretch reads SKI.

The protein belongs to the ATP-dependent AMP-binding enzyme family. It depends on Mg(2+) as a cofactor.

The protein resides in the peroxisome. The enzyme catalyses (E)-4-coumarate + ATP + CoA = (E)-4-coumaroyl-CoA + AMP + diphosphate. The catalysed reaction is (E)-4-coumarate + ATP + H(+) = (E)-4-coumaroyl-AMP + diphosphate. It catalyses the reaction (E)-4-coumaroyl-AMP + CoA = (E)-4-coumaroyl-CoA + AMP + H(+). Carboxylate--CoA ligase that may use 4-coumarate as substrate. Follows a two-step reaction mechanism, wherein the carboxylate substrate first undergoes adenylation by ATP, followed by a thioesterification in the presence of CoA to yield the final CoA thioester. This chain is 4-coumarate--CoA ligase-like 8, found in Arabidopsis thaliana (Mouse-ear cress).